A 453-amino-acid polypeptide reads, in one-letter code: Glutamate--tRNA ligase 2 (453 aa).

Residues 10-20 carry the 'HIGH' region motif; it reads PSPTGFLHIGG. A 'KMSKS' region motif is present at residues 232–236; it reads KLSKR. An ATP-binding site is contributed by Lys235.

Belongs to the class-I aminoacyl-tRNA synthetase family. Glutamate--tRNA ligase type 1 subfamily. Monomer.

It is found in the cytoplasm. It catalyses the reaction tRNA(Glu) + L-glutamate + ATP = L-glutamyl-tRNA(Glu) + AMP + diphosphate. In terms of biological role, catalyzes the attachment of glutamate to tRNA(Glu) in a two-step reaction: glutamate is first activated by ATP to form Glu-AMP and then transferred to the acceptor end of tRNA(Glu). This Wolbachia sp. subsp. Brugia malayi (strain TRS) protein is Glutamate--tRNA ligase 2.